The sequence spans 304 residues: N-carbamoyl-D-amino acid hydrolase (304 aa).

The CN hydrolase domain maps to 5 to 276 (MILAVGQQGP…DEVITAAVCL (272 aa)). Active-site residues include E47, K127, and C172.

Homotetramer.

The enzyme catalyses an N-carbamoyl-D-amino acid + H2O + 2 H(+) = a D-alpha-amino acid + NH4(+) + CO2. With respect to regulation, the activity decreases with increasing concentration of H(2)O(2). Has 68% and 43% of activity remaining upon treatment with 0.1 and 0.2 mM H(2)O(2) for 30 minutes, respectively. Inhibited significantly by 2 mM Zn(2+), Cu(2+) and Ag(+), moderately by Co(2+), Mn(2+), Sn(2+) and Mg(2+), and only slightly by Ba(2+). Slightly activated by Fe(2+) and Ca(2+). No effect on activity by metal chelators EDTA and 8-hydroxyquinoline at 2 mM or by dithiothreitol, 2-mercaptoethanol or phenylmethanesulfonyl fluoride. Catalyzes the hydrolysis of N-carbamoyl-D-amino acids to the corresponding D-amino acids. Hydrolyzes aromatic and aliphatic N-carbamoyl-D-amino acids in vitro. Effectively hydrolyzes N-carbamoyl-D-p-hydroxyphenylglycine and N-carbamoyl-DL-p-hydroxyphenylglycine, and to a lesser extent N-carbamoyl-D-methionine. No activity for N-carbamoyl-L-amino acids, N-carbamoyl-beta-alanine or (RS)-alpha-ethyl-N-carbamoylphenylglycine in vitro. In Ensifer adhaerens (Sinorhizobium morelense), this protein is N-carbamoyl-D-amino acid hydrolase.